A 147-amino-acid chain; its full sequence is Prefoldin subunit alpha (147 aa).

Belongs to the prefoldin alpha subunit family. Heterohexamer of two alpha and four beta subunits.

It localises to the cytoplasm. Its function is as follows. Molecular chaperone capable of stabilizing a range of proteins. Seems to fulfill an ATP-independent, HSP70-like function in archaeal de novo protein folding. This chain is Prefoldin subunit alpha, found in Saccharolobus islandicus (strain L.S.2.15 / Lassen #1) (Sulfolobus islandicus).